Here is a 71-residue protein sequence, read N- to C-terminus: UPF0435 protein BLi00816/BL03111 (71 aa).

It belongs to the UPF0435 family.

The chain is UPF0435 protein BLi00816/BL03111 from Bacillus licheniformis (strain ATCC 14580 / DSM 13 / JCM 2505 / CCUG 7422 / NBRC 12200 / NCIMB 9375 / NCTC 10341 / NRRL NRS-1264 / Gibson 46).